The chain runs to 129 residues: Small ribosomal subunit protein uS11 (129 aa).

It belongs to the universal ribosomal protein uS11 family. In terms of assembly, part of the 30S ribosomal subunit. Interacts with proteins S7 and S18. Binds to IF-3.

Located on the platform of the 30S subunit, it bridges several disparate RNA helices of the 16S rRNA. Forms part of the Shine-Dalgarno cleft in the 70S ribosome. This chain is Small ribosomal subunit protein uS11, found in Haemophilus influenzae (strain ATCC 51907 / DSM 11121 / KW20 / Rd).